A 2492-amino-acid chain; its full sequence is Talin-A (2492 aa).

An FERM domain is found at 84 to 365; the sequence is RPQKFKLLDG…GYIEIIMKAR (282 aa). The I/LWEQ domain maps to 2250-2492; the sequence is EEDNVLEDLE…NSRKQNYNKN (243 aa).

Its subcellular location is the cytoplasm. It is found in the cytoskeleton. The protein localises to the cell cortex. Its function is as follows. Actin-binding protein that may be involved in the control of cell motility and chemotaxis. The protein is Talin-A (talA) of Dictyostelium discoideum (Social amoeba).